A 296-amino-acid chain; its full sequence is 4-hydroxy-tetrahydrodipicolinate synthase (296 aa).

T44 lines the pyruvate pocket. The active-site Proton donor/acceptor is the Y132. K162 (schiff-base intermediate with substrate) is an active-site residue. I204 is a pyruvate binding site.

Belongs to the DapA family. As to quaternary structure, homotetramer; dimer of dimers.

It is found in the cytoplasm. It catalyses the reaction L-aspartate 4-semialdehyde + pyruvate = (2S,4S)-4-hydroxy-2,3,4,5-tetrahydrodipicolinate + H2O + H(+). Its pathway is amino-acid biosynthesis; L-lysine biosynthesis via DAP pathway; (S)-tetrahydrodipicolinate from L-aspartate: step 3/4. In terms of biological role, catalyzes the condensation of (S)-aspartate-beta-semialdehyde [(S)-ASA] and pyruvate to 4-hydroxy-tetrahydrodipicolinate (HTPA). The chain is 4-hydroxy-tetrahydrodipicolinate synthase from Novosphingobium aromaticivorans (strain ATCC 700278 / DSM 12444 / CCUG 56034 / CIP 105152 / NBRC 16084 / F199).